The following is a 105-amino-acid chain: V-type ATP synthase subunit F (105 aa).

It belongs to the V-ATPase F subunit family.

Its function is as follows. Produces ATP from ADP in the presence of a proton gradient across the membrane. This is V-type ATP synthase subunit F from Clostridium perfringens (strain 13 / Type A).